The chain runs to 295 residues: Elongation factor Ts (295 aa).

The segment at 79 to 82 is involved in Mg(2+) ion dislocation from EF-Tu; sequence TDFV.

The protein belongs to the EF-Ts family.

Its subcellular location is the cytoplasm. Functionally, associates with the EF-Tu.GDP complex and induces the exchange of GDP to GTP. It remains bound to the aminoacyl-tRNA.EF-Tu.GTP complex up to the GTP hydrolysis stage on the ribosome. This chain is Elongation factor Ts, found in Mycoplasma capricolum subsp. capricolum (strain California kid / ATCC 27343 / NCTC 10154).